We begin with the raw amino-acid sequence, 211 residues long: Thiamine-phosphate synthase (211 aa).

4-amino-2-methyl-5-(diphosphooxymethyl)pyrimidine contacts are provided by residues 36–40 (QLREK) and asparagine 68. Positions 69 and 88 each coordinate Mg(2+). Serine 107 serves as a coordination point for 4-amino-2-methyl-5-(diphosphooxymethyl)pyrimidine. 133-135 (TGS) is a 2-[(2R,5Z)-2-carboxy-4-methylthiazol-5(2H)-ylidene]ethyl phosphate binding site. Lysine 136 lines the 4-amino-2-methyl-5-(diphosphooxymethyl)pyrimidine pocket. 2-[(2R,5Z)-2-carboxy-4-methylthiazol-5(2H)-ylidene]ethyl phosphate-binding positions include glycine 167 and 187–188 (IT).

This sequence belongs to the thiamine-phosphate synthase family. Mg(2+) is required as a cofactor.

It catalyses the reaction 2-[(2R,5Z)-2-carboxy-4-methylthiazol-5(2H)-ylidene]ethyl phosphate + 4-amino-2-methyl-5-(diphosphooxymethyl)pyrimidine + 2 H(+) = thiamine phosphate + CO2 + diphosphate. The enzyme catalyses 2-(2-carboxy-4-methylthiazol-5-yl)ethyl phosphate + 4-amino-2-methyl-5-(diphosphooxymethyl)pyrimidine + 2 H(+) = thiamine phosphate + CO2 + diphosphate. The catalysed reaction is 4-methyl-5-(2-phosphooxyethyl)-thiazole + 4-amino-2-methyl-5-(diphosphooxymethyl)pyrimidine + H(+) = thiamine phosphate + diphosphate. It functions in the pathway cofactor biosynthesis; thiamine diphosphate biosynthesis; thiamine phosphate from 4-amino-2-methyl-5-diphosphomethylpyrimidine and 4-methyl-5-(2-phosphoethyl)-thiazole: step 1/1. Its function is as follows. Condenses 4-methyl-5-(beta-hydroxyethyl)thiazole monophosphate (THZ-P) and 2-methyl-4-amino-5-hydroxymethyl pyrimidine pyrophosphate (HMP-PP) to form thiamine monophosphate (TMP). The protein is Thiamine-phosphate synthase of Haloarcula marismortui (strain ATCC 43049 / DSM 3752 / JCM 8966 / VKM B-1809) (Halobacterium marismortui).